The chain runs to 204 residues: uncharacterized protein (204 aa).

In terms of biological role, possibly involved in pGI2 replication mechanism. This is an uncharacterized protein from Bacillus thuringiensis.